A 305-amino-acid polypeptide reads, in one-letter code: tRNA pseudouridine synthase B (305 aa).

The active-site Nucleophile is the Asp48.

This sequence belongs to the pseudouridine synthase TruB family. Type 1 subfamily.

It carries out the reaction uridine(55) in tRNA = pseudouridine(55) in tRNA. In terms of biological role, responsible for synthesis of pseudouridine from uracil-55 in the psi GC loop of transfer RNAs. The polypeptide is tRNA pseudouridine synthase B (Actinobacillus pleuropneumoniae serotype 5b (strain L20)).